A 351-amino-acid polypeptide reads, in one-letter code: MFKRFSKKKEAPEDPKNLINIDKPIKELPASIAIPKEKPLTGEQQKMYDEVLKHFSNPDLKVYTSEKNKSEDDLKPLEEEEKAWLTRECFLRYLRATKWVLKDCIDRITMTLAWRREFGISHLGEEHGDKITADLVAVENESGKQVILGYENDARPILYLKPGRQNTKTSHRQVQHLVFMLERVIDFMPAGQDSLALLIDFKDYPDVPKVPGNSKIPPIGVGKEVLHILQTHYPERLGKALLTNIPWLAWTFLKLIHPFIDPLTREKLVFDEPFVKYVPKNELDSLYGGDLKFKYNHDVYWPALVETAREKRDHYFKRFQSFGGIVGLSEVDLRGTHEKLLYPVKSESSTV.

The CRAL-TRIO domain maps to 135–295; sequence LVAVENESGK…LYGGDLKFKY (161 aa).

As to quaternary structure, homodimer. Apo-SFH3 forms a dimer through the hydrophobic interaction of gating helices. Binding of phosphatidylinositol leads to dissociation of the dimer into monomers in a reversible manner.

The protein localises to the lipid droplet. The protein resides in the microsome membrane. It localises to the endoplasmic reticulum membrane. It carries out the reaction a 1,2-diacyl-sn-glycero-3-phospho-(1D-myo-inositol)(in) = a 1,2-diacyl-sn-glycero-3-phospho-(1D-myo-inositol)(out). In terms of biological role, has phosphatidylinositol transfer activity. Involved in the regulation of the phospholipid composition of plasma- and endomembranes. Altering plasma membrane composition may provide a possible mechanism for multidrug resistance. Involved in the regulation of sterol biosynthesis. Contributes to efficient phospholipase D1 activation in the regulation of phospholipid turnover. Regulates the release of fatty acids from lipid droplets. The protein is Phosphatidylinositol transfer protein PDR16 (PDR16) of Saccharomyces cerevisiae (strain ATCC 204508 / S288c) (Baker's yeast).